A 174-amino-acid polypeptide reads, in one-letter code: Large ribosomal subunit protein uL22 (174 aa).

It belongs to the universal ribosomal protein uL22 family. As to quaternary structure, part of the 50S ribosomal subunit.

Functionally, this protein binds specifically to 23S rRNA. It makes multiple contacts with different domains of the 23S rRNA in the assembled 50S subunit and ribosome. In terms of biological role, the globular domain of the protein is located near the polypeptide exit tunnel on the outside of the subunit, while an extended beta-hairpin is found that lines the wall of the exit tunnel in the center of the 70S ribosome. The protein is Large ribosomal subunit protein uL22 of Nanoarchaeum equitans (strain Kin4-M).